A 196-amino-acid polypeptide reads, in one-letter code: DnaA initiator-associating protein DiaA (196 aa).

One can recognise an SIS domain in the interval 34-196 (MVQSLLNGNK…DNTLFPHQND (163 aa)).

The protein belongs to the SIS family. DiaA subfamily. Homotetramer; dimer of dimers.

Functionally, required for the timely initiation of chromosomal replication via direct interactions with the DnaA initiator protein. This chain is DnaA initiator-associating protein DiaA, found in Pectobacterium atrosepticum (strain SCRI 1043 / ATCC BAA-672) (Erwinia carotovora subsp. atroseptica).